We begin with the raw amino-acid sequence, 1975 residues long: Cadherin-87A (1975 aa).

The signal sequence occupies residues 1–17 (MKLPLGLLMICLGLTLA). The Extracellular portion of the chain corresponds to 18-1775 (KGETNLPPVF…AIVQDEFDLA (1758 aa)). 14 consecutive Cadherin domains span residues 28–132 (TQTL…PPEF), 133–245 (QNTP…PPVF), 246–358 (QGSL…PPVF), 359–472 (NHKE…KPVF), 473–669 (EQES…PPVC), 670–774 (ESPL…VPNF), 775–878 (EQQS…DPYF), 879–998 (VPAT…PPRF), 999–1103 (NAPW…DPKF), 1104–1211 (SQSD…APVF), 1212–1318 (TRDV…KPEF), 1319–1431 (VIPA…RPEF), 1432–1553 (PDAS…PPVF), and 1554–1677 (EKPI…PPEE). Asparagine 39, asparagine 77, and asparagine 203 each carry an N-linked (GlcNAc...) asparagine glycan. Residue asparagine 424 is glycosylated (N-linked (GlcNAc...) asparagine). Residues 535–560 (CHDNGESNRRERRDLNEDEHVEEDDG) are disordered. A compositionally biased stretch (basic and acidic residues) spans 537–549 (DNGESNRRERRDL). A compositionally biased stretch (acidic residues) spans 550 to 560 (NEDEHVEEDDG). 2 N-linked (GlcNAc...) asparagine glycosylation sites follow: asparagine 730 and asparagine 761. 10 N-linked (GlcNAc...) asparagine glycosylation sites follow: asparagine 1039, asparagine 1049, asparagine 1111, asparagine 1163, asparagine 1217, asparagine 1325, asparagine 1349, asparagine 1492, asparagine 1576, and asparagine 1691. A helical transmembrane segment spans residues 1776–1796 (VAGLVALVIVLFVGVISFIVL). At 1797-1975 (CCCLKHWNLS…DGDDAVAELI (179 aa)) the chain is on the cytoplasmic side. Residues 1887-1899 (YATIQPRNNQNRL) show a composition bias toward polar residues. The segment at 1887–1916 (YATIQPRNNQNRLTGGGGAGGGSMRSGGGA) is disordered. The span at 1900–1916 (TGGGGAGGGSMRSGGGA) shows a compositional bias: gly residues.

It is found in the cell membrane. Functionally, cadherins are calcium-dependent cell adhesion proteins. They preferentially interact with themselves in a homophilic manner in connecting cells. In Drosophila melanogaster (Fruit fly), this protein is Cadherin-87A (Cad87A).